We begin with the raw amino-acid sequence, 146 residues long: Hemoglobin subunit beta (146 aa).

Val-1 carries the N-acetylvaline modification. The Globin domain maps to 2-146 (HLSADEKNAL…VANALAHKYH (145 aa)). Ser-44 is modified (phosphoserine). Lys-59 carries the N6-acetyllysine modification. His-63 contacts heme b. Residue Lys-82 is modified to N6-acetyllysine. Residue His-92 coordinates heme b. At Cys-93 the chain carries S-nitrosocysteine. Lys-144 bears the N6-acetyllysine mark.

This sequence belongs to the globin family. In terms of assembly, heterotetramer of two alpha chains and two beta chains. Red blood cells.

In terms of biological role, involved in oxygen transport from the lung to the various peripheral tissues. This Sciurus carolinensis (Eastern gray squirrel) protein is Hemoglobin subunit beta.